The primary structure comprises 477 residues: tRNA-2-methylthio-N(6)-dimethylallyladenosine synthase (477 aa).

The 118-residue stretch at 3–120 (KKLFIKTWGC…LPEMINQIKG (118 aa)) folds into the MTTase N-terminal domain. C12, C49, C83, C157, C161, and C164 together coordinate [4Fe-4S] cluster. The Radical SAM core domain occupies 143-375 (KAEGPTAFVS…QNRITQQALR (233 aa)). The TRAM domain occupies 378 to 441 (RNMIDSEQRV…ANSLRGDVLR (64 aa)).

It belongs to the methylthiotransferase family. MiaB subfamily. Monomer. [4Fe-4S] cluster is required as a cofactor.

The protein resides in the cytoplasm. It carries out the reaction N(6)-dimethylallyladenosine(37) in tRNA + (sulfur carrier)-SH + AH2 + 2 S-adenosyl-L-methionine = 2-methylsulfanyl-N(6)-dimethylallyladenosine(37) in tRNA + (sulfur carrier)-H + 5'-deoxyadenosine + L-methionine + A + S-adenosyl-L-homocysteine + 2 H(+). Its function is as follows. Catalyzes the methylthiolation of N6-(dimethylallyl)adenosine (i(6)A), leading to the formation of 2-methylthio-N6-(dimethylallyl)adenosine (ms(2)i(6)A) at position 37 in tRNAs that read codons beginning with uridine. The sequence is that of tRNA-2-methylthio-N(6)-dimethylallyladenosine synthase from Pseudoalteromonas atlantica (strain T6c / ATCC BAA-1087).